We begin with the raw amino-acid sequence, 228 residues long: Superoxide dismutase [Mn], mitochondrial (228 aa).

Residues 1–24 (MALRTLVSRRTLATGLGFRQQLRG) constitute a mitochondrion transit peptide. Mn(2+) is bound by residues His-52, His-100, Asp-189, and His-193.

The protein belongs to the iron/manganese superoxide dismutase family. As to quaternary structure, homotetramer. It depends on Mn(2+) as a cofactor. As to expression, expressed most abundantly in parts of the plant which exhibit a high metabolic activity. Expressed in pre-shooting flower buds, vegetative buds, immature fruits and fully expanded leaves of basal shoots and seedlings.

The protein localises to the mitochondrion matrix. It carries out the reaction 2 superoxide + 2 H(+) = H2O2 + O2. Destroys superoxide anion radicals which are normally produced within the cells and which are toxic to biological systems. The polypeptide is Superoxide dismutase [Mn], mitochondrial (SOD) (Prunus persica (Peach)).